Here is a 32-residue protein sequence, read N- to C-terminus: Trypsin inhibitor 2b (32 aa).

Intrachain disulfides connect Cys3-Cys20, Cys10-Cys22, and Cys16-Cys29.

The protein belongs to the protease inhibitor I7 (squash-type serine protease inhibitor) family.

It localises to the secreted. Functionally, inhibits trypsin. The protein is Trypsin inhibitor 2b of Cucumis sativus (Cucumber).